Reading from the N-terminus, the 147-residue chain is Small ribosomal subunit protein uS12 (147 aa).

This sequence belongs to the universal ribosomal protein uS12 family. In terms of assembly, part of the 30S ribosomal subunit.

With S4 and S5 plays an important role in translational accuracy. Located at the interface of the 30S and 50S subunits. The protein is Small ribosomal subunit protein uS12 of Methanococcus aeolicus (strain ATCC BAA-1280 / DSM 17508 / OCM 812 / Nankai-3).